We begin with the raw amino-acid sequence, 155 residues long: SsrA-binding protein (155 aa).

The segment at 132–155 (DKREDLKQKQMKRDVDRAIKDHMR) is disordered.

The protein belongs to the SmpB family.

It localises to the cytoplasm. Its function is as follows. Required for rescue of stalled ribosomes mediated by trans-translation. Binds to transfer-messenger RNA (tmRNA), required for stable association of tmRNA with ribosomes. tmRNA and SmpB together mimic tRNA shape, replacing the anticodon stem-loop with SmpB. tmRNA is encoded by the ssrA gene; the 2 termini fold to resemble tRNA(Ala) and it encodes a 'tag peptide', a short internal open reading frame. During trans-translation Ala-aminoacylated tmRNA acts like a tRNA, entering the A-site of stalled ribosomes, displacing the stalled mRNA. The ribosome then switches to translate the ORF on the tmRNA; the nascent peptide is terminated with the 'tag peptide' encoded by the tmRNA and targeted for degradation. The ribosome is freed to recommence translation, which seems to be the essential function of trans-translation. The polypeptide is SsrA-binding protein (Oceanobacillus iheyensis (strain DSM 14371 / CIP 107618 / JCM 11309 / KCTC 3954 / HTE831)).